Reading from the N-terminus, the 94-residue chain is Integration host factor subunit beta (94 aa).

It belongs to the bacterial histone-like protein family. Heterodimer of an alpha and a beta chain.

In terms of biological role, this protein is one of the two subunits of integration host factor, a specific DNA-binding protein that functions in genetic recombination as well as in transcriptional and translational control. In Ruegeria pomeroyi (strain ATCC 700808 / DSM 15171 / DSS-3) (Silicibacter pomeroyi), this protein is Integration host factor subunit beta.